Here is a 798-residue protein sequence, read N- to C-terminus: Putative antiporter subunit mnhA2 (798 aa).

The next 21 membrane-spanning stretches (helical) occupy residues 1 to 21 (MSLV…LFTL), 33 to 53 (IALL…PSVM), 78 to 98 (GLSL…VYYA), 109 to 129 (LPRF…IVTA), 133 to 153 (ILMY…IVYW), 167 to 187 (FMIT…IYIV), 209 to 229 (FIPI…QFPF), 241 to 261 (TPVS…FLLF), 272 to 292 (FYIY…AVNA), 300 to 320 (AILA…VGLG), 337 to 357 (MILF…GALF), 381 to 401 (VFPI…GIPF), 431 to 451 (IITV…VYMI), 472 to 492 (PFLF…IFFI), 526 to 546 (GFNL…IMAL), 593 to 613 (ITIT…QAGF), 625 to 645 (GPIE…LTFI), 649 to 669 (LTMV…FILM), 674 to 694 (LALT…VSFS), 710 to 730 (AVKI…VFIA), and 766 to 786 (IDTL…YTLL).

The protein belongs to the CPA3 antiporters (TC 2.A.63) subunit A family. May form a heterooligomeric complex that consists of seven subunits: mnhA2, mnhB2, mnhC2, mnhD2, mnhE2, mnhF2 and mnhG2.

The protein localises to the cell membrane. The sequence is that of Putative antiporter subunit mnhA2 (mnhA2) from Staphylococcus saprophyticus subsp. saprophyticus (strain ATCC 15305 / DSM 20229 / NCIMB 8711 / NCTC 7292 / S-41).